Reading from the N-terminus, the 741-residue chain is Penicillin-binding protein 1B (741 aa).

Over 1–12 the chain is Cytoplasmic; sequence MYPVNLKLSIKF. The chain crosses the membrane as a helical; Signal-anchor for type II membrane protein span at residues 13-33; it reads LFYFFLYFLLIIIIYGVYLYF. Topologically, residues 34–741 are extracellular; it reads KINQVIHGKI…WIRNHNIFCT (708 aa). A transglycosylase region spans residues 139-311; it reads LRLDPQLIAM…SLYNPWNNPV (173 aa). The active-site Proton donor; for transglycosylase activity is the E177. Residues 395–687 are transpeptidase; the sequence is ENAIRHGIQQ…STGAMKIYHN (293 aa). S454 serves as the catalytic Acyl-ester intermediate; for transpeptidase activity.

It in the N-terminal section; belongs to the glycosyltransferase 51 family. In the C-terminal section; belongs to the transpeptidase family.

It localises to the cell membrane. The enzyme catalyses [GlcNAc-(1-&gt;4)-Mur2Ac(oyl-L-Ala-gamma-D-Glu-L-Lys-D-Ala-D-Ala)](n)-di-trans,octa-cis-undecaprenyl diphosphate + beta-D-GlcNAc-(1-&gt;4)-Mur2Ac(oyl-L-Ala-gamma-D-Glu-L-Lys-D-Ala-D-Ala)-di-trans,octa-cis-undecaprenyl diphosphate = [GlcNAc-(1-&gt;4)-Mur2Ac(oyl-L-Ala-gamma-D-Glu-L-Lys-D-Ala-D-Ala)](n+1)-di-trans,octa-cis-undecaprenyl diphosphate + di-trans,octa-cis-undecaprenyl diphosphate + H(+). It catalyses the reaction Preferential cleavage: (Ac)2-L-Lys-D-Ala-|-D-Ala. Also transpeptidation of peptidyl-alanyl moieties that are N-acyl substituents of D-alanine.. Its pathway is cell wall biogenesis; peptidoglycan biosynthesis. Functionally, cell wall formation. Synthesis of cross-linked peptidoglycan from the lipid intermediates. The enzyme has a penicillin-insensitive transglycosylase N-terminal domain (formation of linear glycan strands) and a penicillin-sensitive transpeptidase C-terminal domain (cross-linking of the peptide subunits). The protein is Penicillin-binding protein 1B (mrcB) of Buchnera aphidicola subsp. Baizongia pistaciae (strain Bp).